A 465-amino-acid chain; its full sequence is Cysteine--tRNA ligase (465 aa).

C29 lines the Zn(2+) pocket. The short motif at 31 to 41 is the 'HIGH' region element; the sequence is PTVYNYIHIGN. Residues C209, H234, and E238 each contribute to the Zn(2+) site. A 'KMSKS' region motif is present at residues 266–270; it reads KMSKS. K269 is an ATP binding site. S270 carries the phosphoserine modification.

The protein belongs to the class-I aminoacyl-tRNA synthetase family. Monomer. It depends on Zn(2+) as a cofactor.

It is found in the cytoplasm. It catalyses the reaction tRNA(Cys) + L-cysteine + ATP = L-cysteinyl-tRNA(Cys) + AMP + diphosphate. The polypeptide is Cysteine--tRNA ligase (Bacillus cereus (strain G9842)).